Reading from the N-terminus, the 304-residue chain is Acetylglutamate kinase (304 aa).

Residues 82–83, Arg-104, and Asn-197 each bind substrate; that span reads GG.

Belongs to the acetylglutamate kinase family. ArgB subfamily.

It is found in the cytoplasm. It carries out the reaction N-acetyl-L-glutamate + ATP = N-acetyl-L-glutamyl 5-phosphate + ADP. The protein operates within amino-acid biosynthesis; L-arginine biosynthesis; N(2)-acetyl-L-ornithine from L-glutamate: step 2/4. Its function is as follows. Catalyzes the ATP-dependent phosphorylation of N-acetyl-L-glutamate. This chain is Acetylglutamate kinase, found in Prochlorococcus marinus (strain NATL1A).